The primary structure comprises 488 residues: Stromelysin-3 (488 aa).

Positions 1 to 31 are cleaved as a signal peptide; it reads MAPAAWLRSAAARALLPPMLLLLLQPPPLLA. The propeptide at 32–97 is activation peptide; sequence RALPPDAHHL…GLSARNRQKR (66 aa). The segment at 41-93 is disordered; sequence LHAERRGPQPWHAALPSSPAPAPATQEAPRPASSLRPPRCGVPDPSDGLSARN. A compositionally biased stretch (low complexity) spans 50 to 79; sequence PWHAALPSSPAPAPATQEAPRPASSLRPPR. Residues 78-85 carry the Cysteine switch motif; sequence PRCGVPDP. Zn(2+) contacts are provided by Cys80 and Asp166. Ca(2+)-binding residues include Asp171, Gly172, Gly174, and Ile176. 3 residues coordinate Zn(2+): His179, His192, and His215. The active site involves Glu216. Residues His219 and His225 each coordinate Zn(2+). Hemopexin repeat units follow at residues 291–339, 340–382, 384–432, and 433–480; these read PDAC…WQGL, PSPV…ELGL, RFPV…WRGV, and PSEI…FFGC. A disulfide bridge links Cys294 with Cys480.

Belongs to the peptidase M10A family. Ca(2+) is required as a cofactor. Zn(2+) serves as cofactor. Post-translationally, the precursor is cleaved by a furin endopeptidase. Specifically expressed in stromal cells of breast carcinomas.

Its subcellular location is the secreted. The protein localises to the extracellular space. The protein resides in the extracellular matrix. In terms of biological role, may play an important role in the progression of epithelial malignancies. The protein is Stromelysin-3 (MMP11) of Homo sapiens (Human).